A 165-amino-acid chain; its full sequence is NADPH-dependent 7-cyano-7-deazaguanine reductase (165 aa).

The active-site Thioimide intermediate is the C56. The active-site Proton donor is the D63. Residues 78–80 and 97–98 each bind substrate; these read VES and HE.

It belongs to the GTP cyclohydrolase I family. QueF type 1 subfamily.

It localises to the cytoplasm. The catalysed reaction is 7-aminomethyl-7-carbaguanine + 2 NADP(+) = 7-cyano-7-deazaguanine + 2 NADPH + 3 H(+). It participates in tRNA modification; tRNA-queuosine biosynthesis. Its function is as follows. Catalyzes the NADPH-dependent reduction of 7-cyano-7-deazaguanine (preQ0) to 7-aminomethyl-7-deazaguanine (preQ1). This is NADPH-dependent 7-cyano-7-deazaguanine reductase from Bacillus licheniformis (strain ATCC 14580 / DSM 13 / JCM 2505 / CCUG 7422 / NBRC 12200 / NCIMB 9375 / NCTC 10341 / NRRL NRS-1264 / Gibson 46).